Consider the following 332-residue polypeptide: Transcription factor HBP-1b(c38) (332 aa).

The interval 1–48 (MAEASPRTETSTDDTDENLMLEPGNAALAVVSDSSDRSRDKNGDQKTM) is disordered. A compositionally biased stretch (basic and acidic residues) spans 34–47 (SSDRSRDKNGDQKT). Positions 44–107 (DQKTMRRLAQ…SSADQSHSMS (64 aa)) constitute a bZIP domain. The interval 46–66 (KTMRRLAQNREAARKSRLRKK) is basic motif. The stretch at 47 to 142 (TMRRLAQNRE…RAAVNAHAGD (96 aa)) forms a coiled coil. The leucine-zipper stretch occupies residues 72 to 86 (LENSRLKLTQLEQEL). Residues 111–329 (ALAFDTEYAR…RALSSLWLAR (219 aa)) form the DOG1 domain.

This sequence belongs to the bZIP family. In terms of assembly, binds DNA as a dimer.

The protein localises to the nucleus. Transcriptional activator that binds specifically to the DNA sequence 5'-TGACG-3'. Recognizes ocs elements like the as-1 motif of the cauliflower mosaic virus 35S promoter. Binding to the as-1-like cis elements mediate auxin- and salicylic acid-inducible transcription. Binds to the hexamer motif 5'-ACGTCA-3' of histone gene promoters. The chain is Transcription factor HBP-1b(c38) from Triticum aestivum (Wheat).